We begin with the raw amino-acid sequence, 453 residues long: Exopolyphosphatase PRUNE1 (453 aa).

Residue M1 is modified to N-acetylmethionine. Mn(2+) is bound by residues D28, D30, D106, and D179. The DHH motif motif lies at 106–108; the sequence is DHH. The segment at 393-420 is essential for homodimerization; sequence SLISGLSQDEEDPPLPPTPMNSLVDECP. The tract at residues 395 to 421 is disordered; sequence ISGLSQDEEDPPLPPTPMNSLVDECPL. S399 is subject to Phosphoserine. T410 bears the Phosphothreonine mark. S414 carries the post-translational modification Phosphoserine.

This sequence belongs to the PPase class C family. Prune subfamily. Homooligomer. Able to homodimerize via its C-terminal domain. Interacts with NME1. Interacts with GSK3; at focal adhesion complexes where paxillin and vinculin are colocalized. Interacts with alpha and beta tubulin. It depends on Mn(2+) as a cofactor. As to expression, ubiquitously expressed. Seems to be overexpressed in aggressive sarcoma subtypes, such as leiomyosarcomas and malignant fibrous histiocytomas (MFH) as well as in the less malignant liposarcomas.

It localises to the cytoplasm. It is found in the nucleus. The protein resides in the cell junction. The protein localises to the focal adhesion. The catalysed reaction is diphosphate + H2O = 2 phosphate + H(+). Activated by magnesium ions and inhibited by manganese ions. Inhibited by dipyridamole, moderately sensitive to IBMX and inhibited by vinpocetine. Its function is as follows. Phosphodiesterase (PDE) that has higher activity toward cAMP than cGMP, as substrate. Plays a role in cell proliferation, migration and differentiation, and acts as a negative regulator of NME1. Plays a role in the regulation of neurogenesis. Involved in the regulation of microtubule polymerization. This Homo sapiens (Human) protein is Exopolyphosphatase PRUNE1.